The primary structure comprises 248 residues: E3 ubiquitin-protein ligase BIG BROTHER (248 aa).

The segment at 197–238 (CVICQLKYKIGERQMNLPCKHVYHSECISKWLSINKVCPVCN) adopts an RING-type; atypical zinc-finger fold.

In terms of assembly, interacts with the E2 ubiquitin conjugating enzyme UBC10 via the RING domain. Interacts with DA1. Auto-ubiquitinated. As to expression, mostly expressed in inflorescence, and, to a lower extent, in seedlings, roots, stems, leaves and siliques.

It catalyses the reaction S-ubiquitinyl-[E2 ubiquitin-conjugating enzyme]-L-cysteine + [acceptor protein]-L-lysine = [E2 ubiquitin-conjugating enzyme]-L-cysteine + N(6)-ubiquitinyl-[acceptor protein]-L-lysine.. Its pathway is protein modification; protein ubiquitination. E3 ubiquitin-protein ligase that limits organ size, and possibly seed size, in a dose-dependent manner. Negatively regulates the duration of cell proliferation in leaves and petals independently of the major phytohormones (e.g. auxin, cytokinin, gibberellin, brassinosteroids, ethylene, abscisic acid, jasmonic acid), probably by targeting growth stimulators for degradation. Limits the proliferation of root meristematic cells. Polyubiquitinates DA1. Involved in the promotion of leaf senescence, in addition to its function in restricting plant growth. Possesses E3 ubiquitin-protein ligase activity in vitro. The polypeptide is E3 ubiquitin-protein ligase BIG BROTHER (BB) (Arabidopsis thaliana (Mouse-ear cress)).